The following is a 135-amino-acid chain: Succinate dehydrogenase assembly factor 3, mitochondrial (135 aa).

Residues 1-12 (MRIFTRLLYAAP) constitute a mitochondrion transit peptide.

This sequence belongs to the complex I LYR family. SDHAF3 subfamily. As to quaternary structure, interacts with the iron-sulfur protein subunit within the SDH catalytic dimer.

The protein localises to the mitochondrion matrix. In terms of biological role, plays an essential role in the assembly of succinate dehydrogenase (SDH), an enzyme complex (also referred to as respiratory complex II) that is a component of both the tricarboxylic acid (TCA) cycle and the mitochondrial electron transport chain, and which couples the oxidation of succinate to fumarate with the reduction of ubiquinone (coenzyme Q) to ubiquinol. Promotes maturation of the iron-sulfur protein subunit of the SDH catalytic dimer, protecting it from the deleterious effects of oxidants. May act together with SDHAF1. The protein is Succinate dehydrogenase assembly factor 3, mitochondrial of Emericella nidulans (strain FGSC A4 / ATCC 38163 / CBS 112.46 / NRRL 194 / M139) (Aspergillus nidulans).